A 344-amino-acid polypeptide reads, in one-letter code: tRNA N6-adenosine threonylcarbamoyltransferase (344 aa).

Residues His-111 and His-115 each contribute to the Fe cation site. Substrate contacts are provided by residues 134–138 (LVSGG), Asp-167, Gly-180, and Asn-273. Asp-301 provides a ligand contact to Fe cation.

This sequence belongs to the KAE1 / TsaD family. Requires Fe(2+) as cofactor.

The protein resides in the cytoplasm. It catalyses the reaction L-threonylcarbamoyladenylate + adenosine(37) in tRNA = N(6)-L-threonylcarbamoyladenosine(37) in tRNA + AMP + H(+). Required for the formation of a threonylcarbamoyl group on adenosine at position 37 (t(6)A37) in tRNAs that read codons beginning with adenine. Is involved in the transfer of the threonylcarbamoyl moiety of threonylcarbamoyl-AMP (TC-AMP) to the N6 group of A37, together with TsaE and TsaB. TsaD likely plays a direct catalytic role in this reaction. The sequence is that of tRNA N6-adenosine threonylcarbamoyltransferase from Cupriavidus necator (strain ATCC 17699 / DSM 428 / KCTC 22496 / NCIMB 10442 / H16 / Stanier 337) (Ralstonia eutropha).